A 523-amino-acid chain; its full sequence is Pentatricopeptide repeat-containing protein At1g52640, mitochondrial (523 aa).

A mitochondrion-targeting transit peptide spans 1–5 (MAIRT). PPR repeat units lie at residues 101 to 135 (SLESYHILVEILGSSKQFALLWDFLIEAREYNYFE), 137 to 171 (SSKVFWIVFRAYSRANLPSEACRAFNRMVEFGIKP), 172 to 206 (CVDDLDQLLHSLCDKKHVNHAQEFFGKAKGFGIVP), 207 to 241 (SAKTYSILVRGWARIRDASGARKVFDEMLERNCVV), 242 to 276 (DLLAYNALLDALCKSGDVDGGYKMFQEMGNLGLKP), 277 to 311 (DAYSFAIFIHAYCDAGDVHSAYKVLDRMKRYDLVP), 312 to 346 (NVYTFNHIIKTLCKNEKVDDAYLLLDEMIQKGANP), 347 to 381 (DTWTYNSIMAYHCDHCEVNRATKLLSRMDRTKCLP), 382 to 416 (DRHTYNMVLKLLIRIGRFDRATEIWEGMSERKFYP), and 417 to 452 (TVATYTVMIHGLVRKKGKLEEACRYFEMMIDEGIPP). The segment at 498–523 (KRRRLGRRSENSEDDDDDFELERDTI) is disordered. Acidic residues predominate over residues 509–523 (SEDDDDDFELERDTI).

This sequence belongs to the PPR family. P subfamily.

The protein resides in the mitochondrion. The chain is Pentatricopeptide repeat-containing protein At1g52640, mitochondrial from Arabidopsis thaliana (Mouse-ear cress).